Reading from the N-terminus, the 250-residue chain is Phosphoribosylaminoimidazole-succinocarboxamide synthase (250 aa).

It belongs to the SAICAR synthetase family.

It carries out the reaction 5-amino-1-(5-phospho-D-ribosyl)imidazole-4-carboxylate + L-aspartate + ATP = (2S)-2-[5-amino-1-(5-phospho-beta-D-ribosyl)imidazole-4-carboxamido]succinate + ADP + phosphate + 2 H(+). Its pathway is purine metabolism; IMP biosynthesis via de novo pathway; 5-amino-1-(5-phospho-D-ribosyl)imidazole-4-carboxamide from 5-amino-1-(5-phospho-D-ribosyl)imidazole-4-carboxylate: step 1/2. This Synechococcus sp. (strain WH7803) protein is Phosphoribosylaminoimidazole-succinocarboxamide synthase.